We begin with the raw amino-acid sequence, 215 residues long: Glutathione S-transferase F10 (215 aa).

The GST N-terminal domain occupies 2–81 (VLTIYAPLFA…YIAEKYRSQG (80 aa)). Residues 11 to 12 (AS), 39 to 40 (QR), 52 to 53 (KI), and 65 to 66 (ES) each bind glutathione. A GST C-terminal domain is found at 88-215 (TIEERGQVEQ…EVSAKYSLPV (128 aa)).

This sequence belongs to the GST superfamily. Phi family. As to quaternary structure, interacts with BAK1. Expressed in roots, stems, floral buds, mature flowers and leaves.

The protein localises to the cytoplasm. The protein resides in the cytosol. The catalysed reaction is RX + glutathione = an S-substituted glutathione + a halide anion + H(+). Its function is as follows. In vitro, possesses glutathione S-transferase activity toward 1-chloro-2,4-dinitrobenzene (CDNB) and benzyl isothiocyanate (BITC). May be involved in the conjugation of reduced glutathione to a wide number of exogenous and endogenous hydrophobic electrophiles and have a detoxification role against certain herbicides. The polypeptide is Glutathione S-transferase F10 (Arabidopsis thaliana (Mouse-ear cress)).